We begin with the raw amino-acid sequence, 156 residues long: ATP synthase subunit b (156 aa).

A helical membrane pass occupies residues Ala11–Ala31.

This sequence belongs to the ATPase B chain family. In terms of assembly, F-type ATPases have 2 components, F(1) - the catalytic core - and F(0) - the membrane proton channel. F(1) has five subunits: alpha(3), beta(3), gamma(1), delta(1), epsilon(1). F(0) has three main subunits: a(1), b(2) and c(10-14). The alpha and beta chains form an alternating ring which encloses part of the gamma chain. F(1) is attached to F(0) by a central stalk formed by the gamma and epsilon chains, while a peripheral stalk is formed by the delta and b chains.

It localises to the cell inner membrane. F(1)F(0) ATP synthase produces ATP from ADP in the presence of a proton or sodium gradient. F-type ATPases consist of two structural domains, F(1) containing the extramembraneous catalytic core and F(0) containing the membrane proton channel, linked together by a central stalk and a peripheral stalk. During catalysis, ATP synthesis in the catalytic domain of F(1) is coupled via a rotary mechanism of the central stalk subunits to proton translocation. In terms of biological role, component of the F(0) channel, it forms part of the peripheral stalk, linking F(1) to F(0). The chain is ATP synthase subunit b from Salmonella agona (strain SL483).